Here is a 135-residue protein sequence, read N- to C-terminus: Histone H3 type 3 (135 aa).

The tract at residues 1–40 (MARTKQTARKSTGGKAPRKQLATKAARKTPATGGVKKPHR) is disordered. K5 is subject to N6-methyllysine. N6-acetyllysine; alternate is present on K10. K10 is subject to N6-methyllysine; alternate. S11 carries the phosphoserine modification. Residue T12 is modified to Phosphothreonine. Residues K15, K19, and K24 each carry the N6-acetyllysine modification. At K28 the chain carries N6-acetyllysine; alternate. K28 carries the post-translational modification N6-methyllysine; alternate. 2 positions are modified to N6-methyllysine: K36 and K37.

It belongs to the histone H3 family. The nucleosome is a histone octamer containing two molecules each of H2A, H2B, H3 and H4 assembled in one H3-H4 heterotetramer and two H2A-H2B heterodimers. The octamer wraps approximately 147 bp of DNA. Post-translationally, acetylation is generally linked to gene activation. Acetylated to form H3K9ac (11%), H3K14ac (17%), H3K18ac (11%), H3K23ac (16%) and H3K27ac (7%). H3K4, H3K35 and H3K36 are not acetylated. H3K4me prevents acetylation. 32% of the histone H3 are acetylated with, on average, 2.4 acetyl-Lys. They are all continuously deacatylated and re-acetylated with a half-life of approximately 2 minutes. In terms of processing, monomethylated to form H3K4me1 (81%), H3K9me1 (16%), H3K27me1 (25%), H3K35me1 (25%) and H3K36me1 (5%). No methylation at H3K14, H3K18 and H3K23. Methylated by a protein complex that includes Mut11. Set1 methylates specifically H3K4. H3K4me1 is associated with silenced euchromatin. Set3 forms H3K9me1, while H3K9me2 is undetected. H3K9me1 is specifically associated with silent, multi-copy transgenes. No phosphorylation detected.

It localises to the nucleus. It is found in the chromosome. In terms of biological role, core component of nucleosome. Nucleosomes wrap and compact DNA into chromatin, limiting DNA accessibility to the cellular machineries which require DNA as a template. Histones thereby play a central role in transcription regulation, DNA repair, DNA replication and chromosomal stability. DNA accessibility is regulated via a complex set of post-translational modifications of histones, also called histone code, and nucleosome remodeling. In Chlamydomonas reinhardtii (Chlamydomonas smithii), this protein is Histone H3 type 3 (ch3-IV).